The chain runs to 253 residues: Putative tyrosine-protein phosphatase OCA1 (253 aa).

Residues 1 to 21 (MHRTSIVEELERHQQDQKADQ) are compositionally biased toward basic and acidic residues. The tract at residues 1-84 (MHRTSIVEEL…PRMKTIVKPP (84 aa)) is disordered. Positions 27 to 65 (SDASNSALQESSDPRLSTTDNTNTPEINVNDQQQEQQVA) are enriched in polar residues. The region spanning 93–249 (NFGPVERNLY…IIVYPESAPE (157 aa)) is the Tyrosine-protein phosphatase domain. Cys-186 serves as the catalytic Phosphocysteine intermediate.

The protein belongs to the protein-tyrosine phosphatase family.

It is found in the cytoplasm. It catalyses the reaction O-phospho-L-tyrosyl-[protein] + H2O = L-tyrosyl-[protein] + phosphate. Functionally, putative tyrosine-protein phosphatase required for protection against superoxide stress. This Yarrowia lipolytica (strain CLIB 122 / E 150) (Yeast) protein is Putative tyrosine-protein phosphatase OCA1 (OCA1).